Consider the following 248-residue polypeptide: UPF0736 protein BT9727_1080 (248 aa).

The protein belongs to the UPF0736 family.

The polypeptide is UPF0736 protein BT9727_1080 (Bacillus thuringiensis subsp. konkukian (strain 97-27)).